Reading from the N-terminus, the 291-residue chain is Elongation factor Ts (291 aa).

Residues 79–82 (TDFV) are involved in Mg(2+) ion dislocation from EF-Tu.

The protein belongs to the EF-Ts family.

The protein localises to the cytoplasm. In terms of biological role, associates with the EF-Tu.GDP complex and induces the exchange of GDP to GTP. It remains bound to the aminoacyl-tRNA.EF-Tu.GTP complex up to the GTP hydrolysis stage on the ribosome. This Stenotrophomonas maltophilia (strain K279a) protein is Elongation factor Ts.